We begin with the raw amino-acid sequence, 498 residues long: ATP synthase subunit beta, chloroplastic (498 aa).

172 to 179 (GGAGVGKT) contributes to the ATP binding site.

Belongs to the ATPase alpha/beta chains family. As to quaternary structure, F-type ATPases have 2 components, CF(1) - the catalytic core - and CF(0) - the membrane proton channel. CF(1) has five subunits: alpha(3), beta(3), gamma(1), delta(1), epsilon(1). CF(0) has four main subunits: a(1), b(1), b'(1) and c(9-12).

Its subcellular location is the plastid. The protein localises to the chloroplast thylakoid membrane. The enzyme catalyses ATP + H2O + 4 H(+)(in) = ADP + phosphate + 5 H(+)(out). Functionally, produces ATP from ADP in the presence of a proton gradient across the membrane. The catalytic sites are hosted primarily by the beta subunits. This chain is ATP synthase subunit beta, chloroplastic, found in Asarum canadense (Wild ginger).